A 213-amino-acid polypeptide reads, in one-letter code: ATP phosphoribosyltransferase (213 aa).

It belongs to the ATP phosphoribosyltransferase family. Short subfamily. As to quaternary structure, heteromultimer composed of HisG and HisZ subunits.

Its subcellular location is the cytoplasm. It carries out the reaction 1-(5-phospho-beta-D-ribosyl)-ATP + diphosphate = 5-phospho-alpha-D-ribose 1-diphosphate + ATP. It functions in the pathway amino-acid biosynthesis; L-histidine biosynthesis; L-histidine from 5-phospho-alpha-D-ribose 1-diphosphate: step 1/9. Its function is as follows. Catalyzes the condensation of ATP and 5-phosphoribose 1-diphosphate to form N'-(5'-phosphoribosyl)-ATP (PR-ATP). Has a crucial role in the pathway because the rate of histidine biosynthesis seems to be controlled primarily by regulation of HisG enzymatic activity. In Listeria innocua serovar 6a (strain ATCC BAA-680 / CLIP 11262), this protein is ATP phosphoribosyltransferase (hisG).